The chain runs to 626 residues: Basic helix-loop-helix ARNT-like protein 1 (626 aa).

The disordered stretch occupies residues 1–60; that stretch reads MADQRMDISSTISDFMSPGPTDLLSSSLGTSGVDCNRKRKGSSTDYQESMDTDKDDPHGR. At S17 the chain carries Phosphoserine; by GSK3-beta. Residues 17-32 show a composition bias toward low complexity; sequence SPGPTDLLSSSLGTSG. T21 carries the phosphothreonine; by GSK3-beta modification. Positions 36–41 match the Nuclear localization signal motif; it reads NRKRKG. Basic and acidic residues predominate over residues 51 to 60; the sequence is DTDKDDPHGR. The 54-residue stretch at 72-125 folds into the bHLH domain; the sequence is NAREAHSQIEKRRRDKMNSFIDELASLVPTCNAMSRKLDKLTVLRMAVQHMKTL. S78 bears the Phosphoserine mark. S90 is subject to Phosphoserine; by CK2. Positions 142–152 match the Nuclear export signal 1 motif; sequence LSDDELKHLIL. In terms of domain architecture, PAS 1 spans 143-215; it reads SDDELKHLIL…EQLSSSDTAP (73 aa). A Glycyl lysine isopeptide (Lys-Gly) (interchain with G-Cter in SUMO2 and SUMO3) cross-link involves residue K252. K259 participates in a covalent cross-link: Glycyl lysine isopeptide (Lys-Gly) (interchain with G-Cter in SUMO2). Residues 326–396 form the PAS 2 domain; sequence PQPVNGEIRV…ECHRQVLQTR (71 aa). A Nuclear export signal 2 motif is present at residues 361–369; it reads LAYLPQELL. One can recognise a PAC domain in the interval 401–444; that stretch reads TNCYKFKIKDGSFITLRSRWFSFMNPWTKEVEYIVSTNTVVLAN. Disordered stretches follow at residues 458–493 and 511–595; these read ASPHSMDSMLPSGEGGPKRTHPTVPGIPGGTRAGAG and GSSP…SPSN. Gly residues predominate over residues 484–493; the sequence is IPGGTRAGAG. Positions 508–588 are interaction with CIART; the sequence is RIRGSSPSSC…IGIDMIDNDQ (81 aa). Low complexity predominate over residues 511–521; the sequence is GSSPSSCGSSP. K538 carries the N6-acetyllysine modification.

In terms of assembly, component of the circadian clock oscillator which includes the CRY1/2 proteins, CLOCK or NPAS2,BMAL1 or BMAL2, CSNK1D and/or CSNK1E, TIMELESS and the PER1/2/3 proteins. Forms a heterodimer with CLOCK. The CLOCK-BMAL1 heterodimer is required for E-box-dependent transactivation, for CLOCK nuclear translocation and degradation, and, for phosphorylation of both CLOCK and BMAL1. Part of a nuclear complex which also includes RACK1 and PRKCA; RACK1 and PRKCA are recruited to the complex in a circadian manner. Interacts with NPAS2. Interacts with EZH2. Interacts with SUMO3. Interacts with SIRT1. Interacts with AHR. Interacts with ID1, ID2 and ID3. Interacts with DDX4. Interacts with OGT. Interacts with EED and SUZ12. Interacts with MTA1. Interacts with CIART. Interacts with HSP90. Interacts with KAT2B and EP300. Interacts with BHLHE40/DEC1 and BHLHE41/DEC2. Interacts with RELB and the interaction is enhanced in the presence of CLOCK. Interacts with PER1, PER2, CRY1 and CRY2 and this interaction requires a translocation to the nucleus. Interaction of the CLOCK-BMAL1 heterodimer with PER or CRY inhibits transcription activation. Interaction of the CLOCK-BMAL1 with CRY1 is independent of DNA but with PER2 is off DNA. The CLOCK-BMAL1 heterodimer interacts with GSK3B. Interacts with KDM5A. Interacts with KMT2A; in a circadian manner. Interacts with UBE3A. Interacts with PRKCG. Interacts with MAGEL2. Interacts with NCOA2. Interacts with THRAP3. The CLOCK-BMAL1 heterodimer interacts with PASD1. Interacts with PASD1. Interacts with USP9X. Interacts with PIWIL2 (via PIWI domain). Interacts with HDAC3. Interacts with HNF4A. In terms of processing, ubiquitinated, leading to its proteasomal degradation. Deubiquitinated by USP9X. Post-translationally, O-glycosylated; contains O-GlcNAc. O-glycosylation by OGT prevents protein degradation by inhibiting ubiquitination. It also stabilizes the CLOCK-BMAL1 heterodimer thereby increasing CLOCK-BMAL1-mediated transcription of genes in the negative loop of the circadian clock such as PER1/2/3 and CRY1/2. Acetylated on Lys-538 by CLOCK during the repression phase of the circadian cycle. Acetylation facilitates recruitment of CRY1 protein and initiates the repression phase of the circadian cycle. Acetylated at Lys-538 by KAT5 during the activation phase of the cycle, leading to recruitment of the positive transcription elongation factor b (P-TEFb) and BRD4, followed by productive elongation of circadian transcripts. Deacetylated by SIRT1, which may result in decreased protein stability. In terms of processing, phosphorylated upon dimerization with CLOCK. Phosphorylation enhances the transcriptional activity, alters the subcellular localization and decreases the stability of the CLOCK-BMAL1 heterodimer by promoting its degradation. Phosphorylation shows circadian variations in the liver with a peak between CT10 to CT14. Phosphorylation at Ser-90 by CK2 is essential for its nuclear localization, its interaction with CLOCK and controls CLOCK nuclear entry. Dephosphorylation at Ser-78 is important for dimerization with CLOCK and transcriptional activity. Post-translationally, sumoylated on Lys-259 upon dimerization with CLOCK. Predominantly conjugated to poly-SUMO2/3 rather than SUMO1 and the level of these conjugates undergo rhythmic variation, peaking at CT9-CT12. Sumoylation localizes it exclusively to the PML body and promotes its ubiquitination in the PML body, ubiquitin-dependent proteasomal degradation and the transcriptional activity of the CLOCK-BMAL1 heterodimer. Undergoes lysosome-mediated degradation in a time-dependent manner in the liver. In terms of tissue distribution, hair follicles (at protein level). Highly expressed in the adult brain, skeletal muscle and heart.

The protein resides in the nucleus. The protein localises to the cytoplasm. Its subcellular location is the PML body. There is conflicting data about the effect of NAD cofactors on activity. PubMed:11441146 suggests that the redox state of the cell can modulate the transcriptional activity of the CLOCK-BMAL1 heterodimer; NADH and NADPH enhance the DNA-binding activity of the heterodimer. PubMed:23229515 reports that NADH and NADPH have no significant effect on DNA-binding activity of the CLOCK-BMAL1 heterodimer. Its function is as follows. Transcriptional activator which forms a core component of the circadian clock. The circadian clock, an internal time-keeping system, regulates various physiological processes through the generation of approximately 24 hour circadian rhythms in gene expression, which are translated into rhythms in metabolism and behavior. It is derived from the Latin roots 'circa' (about) and 'diem' (day) and acts as an important regulator of a wide array of physiological functions including metabolism, sleep, body temperature, blood pressure, endocrine, immune, cardiovascular, and renal function. Consists of two major components: the central clock, residing in the suprachiasmatic nucleus (SCN) of the brain, and the peripheral clocks that are present in nearly every tissue and organ system. Both the central and peripheral clocks can be reset by environmental cues, also known as Zeitgebers (German for 'timegivers'). The predominant Zeitgeber for the central clock is light, which is sensed by retina and signals directly to the SCN. The central clock entrains the peripheral clocks through neuronal and hormonal signals, body temperature and feeding-related cues, aligning all clocks with the external light/dark cycle. Circadian rhythms allow an organism to achieve temporal homeostasis with its environment at the molecular level by regulating gene expression to create a peak of protein expression once every 24 hours to control when a particular physiological process is most active with respect to the solar day. Transcription and translation of core clock components (CLOCK, NPAS2, BMAL1, BMAL2, PER1, PER2, PER3, CRY1 and CRY2) plays a critical role in rhythm generation, whereas delays imposed by post-translational modifications (PTMs) are important for determining the period (tau) of the rhythms (tau refers to the period of a rhythm and is the length, in time, of one complete cycle). A diurnal rhythm is synchronized with the day/night cycle, while the ultradian and infradian rhythms have a period shorter and longer than 24 hours, respectively. Disruptions in the circadian rhythms contribute to the pathology of cardiovascular diseases, cancer, metabolic syndromes and aging. A transcription/translation feedback loop (TTFL) forms the core of the molecular circadian clock mechanism. Transcription factors, CLOCK or NPAS2 and BMAL1 or BMAL2, form the positive limb of the feedback loop, act in the form of a heterodimer and activate the transcription of core clock genes and clock-controlled genes (involved in key metabolic processes), harboring E-box elements (5'-CACGTG-3') within their promoters. The core clock genes: PER1/2/3 and CRY1/2 which are transcriptional repressors form the negative limb of the feedback loop and interact with the CLOCK|NPAS2-BMAL1|BMAL2 heterodimer inhibiting its activity and thereby negatively regulating their own expression. This heterodimer also activates nuclear receptors NR1D1/2 and RORA/B/G, which form a second feedback loop and which activate and repress BMAL1 transcription, respectively. BMAL1 positively regulates myogenesis and negatively regulates adipogenesis via the transcriptional control of the genes of the canonical Wnt signaling pathway. Plays a role in normal pancreatic beta-cell function; regulates glucose-stimulated insulin secretion via the regulation of antioxidant genes NFE2L2/NRF2 and its targets SESN2, PRDX3, CCLC and CCLM. Negatively regulates the mTORC1 signaling pathway; regulates the expression of MTOR and DEPTOR. Controls diurnal oscillations of Ly6C inflammatory monocytes; rhythmic recruitment of the PRC2 complex imparts diurnal variation to chemokine expression that is necessary to sustain Ly6C monocyte rhythms. Regulates the expression of HSD3B2, STAR, PTGS2, CYP11A1, CYP19A1 and LHCGR in the ovary and also the genes involved in hair growth. Plays an important role in adult hippocampal neurogenesis by regulating the timely entry of neural stem/progenitor cells (NSPCs) into the cell cycle and the number of cell divisions that take place prior to cell-cycle exit. Regulates the circadian expression of CIART and KLF11. The CLOCK-BMAL1 heterodimer regulates the circadian expression of SERPINE1/PAI1, VWF, B3, CCRN4L/NOC, NAMPT, DBP, MYOD1, PPARGC1A, PPARGC1B, SIRT1, GYS2, F7, NGFR, GNRHR, BHLHE40/DEC1, ATF4, MTA1, KLF10 and also genes implicated in glucose and lipid metabolism. Promotes rhythmic chromatin opening, regulating the DNA accessibility of other transcription factors. The NPAS2-BMAL1 heterodimer positively regulates the expression of MAOA, F7 and LDHA and modulates the circadian rhythm of daytime contrast sensitivity by regulating the rhythmic expression of adenylate cyclase type 1 (ADCY1) in the retina. The preferred binding motif for the CLOCK-BMAL1 heterodimer is 5'-CACGTGA-3', which contains a flanking adenine nucleotide at the 3-prime end of the canonical 6-nucleotide E-box sequence. CLOCK specifically binds to the half-site 5'-CAC-3', while BMAL1 binds to the half-site 5'-GTGA-3'. The CLOCK-BMAL1 heterodimer also recognizes the non-canonical E-box motifs 5'-AACGTGA-3' and 5'-CATGTGA-3'. Essential for the rhythmic interaction of CLOCK with ASS1 and plays a critical role in positively regulating CLOCK-mediated acetylation of ASS1. Plays a role in protecting against lethal sepsis by limiting the expression of immune checkpoint protein CD274 in macrophages in a PKM2-dependent manner. Regulates the diurnal rhythms of skeletal muscle metabolism via transcriptional activation of genes promoting triglyceride synthesis (DGAT2) and metabolic efficiency (COQ10B). (Microbial infection) Regulates SARS coronavirus-2/SARS-CoV-2 entry and replication in lung epithelial cells probably through the post-transcriptional regulation of ACE2 and interferon-stimulated gene expression. In Homo sapiens (Human), this protein is Basic helix-loop-helix ARNT-like protein 1.